A 1187-amino-acid chain; its full sequence is Roquin-2 (1187 aa).

Residues cysteine 14, cysteine 17, cysteine 33, histidine 35, cysteine 38, cysteine 50, and aspartate 53 each coordinate Zn(2+). The RING-type; degenerate zinc-finger motif lies at 14–54 (CPICYNEFDENVHKPISLGCSHTVCKTCLNKLHRKACPFDQ). The HEPN-N stretch occupies residues 91 to 170 (ENKHYEVAKK…RTVTELILQH (80 aa)). Residues 171–325 (QNPQQLSANL…SIIDKLQSPE (155 aa)) are ROQ. The HEPN-C stretch occupies residues 326 to 396 (SFAKSVQELT…GLVDFIQNYS (71 aa)). The C3H1-type zinc-finger motif lies at 410–438 (KYKTSMCRDLRQQGGCPRGTNCTFAHSQE). Disordered regions lie at residues 527-571 (VGTN…GTEL) and 640-677 (NVPESSLPPASMPYADHYSTFSPRDRMNSSPYQPPPPQ). Residues 529–545 (TNAQNAGPSAESVSENK) show a composition bias toward polar residues. At serine 548 the chain carries Phosphoserine. Polar residues predominate over residues 553–571 (PVSNAAATSAGPSNFGTEL). Serine 806, serine 981, and serine 1115 each carry phosphoserine.

In terms of assembly, interacts with EDC4. Interacts with CCR4-NOT deadenylase complex. Interacts with MAP3K5; the interaction is probably stimulus-dependent. In terms of processing, proteolytically cleaved by MALT1 in activated CD4(+) T cells; cleavage at Arg-509 is critical for promoting RC3H1 degradation in response to T-cell receptor (TCR) stimulation, and hence is necessary for prolonging the stability of a set of mRNAs controlling Th17 cell differentiation. In terms of tissue distribution, highest levels in lymph node and thymus and slightly lesser amounts in brain, lung, and spleen (at protein level). Very weak expression in heart, muscle, and kidney (at protein level). Expressed in CD4(+) helper T-cells (at protein level).

The protein localises to the cytoplasm. The protein resides in the P-body. It catalyses the reaction S-ubiquitinyl-[E2 ubiquitin-conjugating enzyme]-L-cysteine + [acceptor protein]-L-lysine = [E2 ubiquitin-conjugating enzyme]-L-cysteine + N(6)-ubiquitinyl-[acceptor protein]-L-lysine.. The protein operates within protein modification; protein ubiquitination. With respect to regulation, binding to dsRNA, but not CDE RNA, crosstalks with the E3 ubiquitin ligase activity and may inhibit ubiquitination. Its function is as follows. Post-transcriptional repressor of mRNAs containing a conserved stem loop motif, called constitutive decay element (CDE), which is often located in the 3'-UTR, as in HMGXB3, ICOS, IER3, NFKBID, NFKBIZ, PPP1R10, TNF and in many more mRNAs. Binds to CDE and promotes mRNA deadenylation and degradation. This process does not involve miRNAs. In follicular helper T (Tfh) cells, represses of ICOS and TNFRSF4 expression, thus preventing spontaneous Tfh cell differentiation, germinal center B-cell differentiation in the absence of immunization and autoimmunity. In resting or LPS-stimulated macrophages, controls inflammation by suppressing TNF expression. Also recognizes CDE in its own mRNA and in that of paralogous RC3H1, possibly leading to feedback loop regulation. Inhibits cooperatively with ZC3H12A the differentiation of helper T cells Th17 in lungs. They repress target mRNA encoding the Th17 cell-promoting factors IL6, ICOS, REL, IRF4, NFKBID and NFKBIZ. The cooperation requires RNA-binding by RC3H1 and the nuclease activity of ZC3H12A. miRNA-binding protein that regulates microRNA homeostasis. Enhances DICER-mediated processing of pre-MIR146a but reduces mature MIR146a levels through an increase of 3' end uridylation. Both inhibits ICOS mRNA expression and they may act together to exert the suppression. Acts as a ubiquitin E3 ligase. Pairs with E2 enzymes UBE2B, UBE2D2, UBE2E2, UBE2E3, UBE2G2, UBE2K and UBE2Q2 and produces polyubiquitin chains. Shows the strongest activity when paired with UBE2N:UBE2V1 or UBE2N:UBE2V2 E2 complexes and generate both short and long polyubiquitin chains. Involved in the ubiquitination of MAP3K5. Able to interact with double-stranded RNA (dsRNA). The chain is Roquin-2 (Rc3h2) from Mus musculus (Mouse).